The chain runs to 101 residues: MAKKSAVAREVKRRKLVEANFQKRAELRKLAKSLSVSEEERERAREALNKMKRDTSPSRLHNRCLLTGRPRGYLRKFAISRICFRQMASMGDIPGVIKASW.

The protein belongs to the universal ribosomal protein uS14 family. Part of the 30S ribosomal subunit. Contacts proteins S3 and S10.

Its function is as follows. Binds 16S rRNA, required for the assembly of 30S particles and may also be responsible for determining the conformation of the 16S rRNA at the A site. The polypeptide is Small ribosomal subunit protein uS14 (Chlamydia muridarum (strain MoPn / Nigg)).